We begin with the raw amino-acid sequence, 245 residues long: Chymotrypsinogen A (245 aa).

Intrachain disulfides connect C1–C122, C42–C58, C136–C201, C168–C182, and C191–C220. A propeptide spanning residues 14–15 (SR) is cleaved from the precursor. The Peptidase S1 domain occupies 16 to 243 (IVNGEEAVPG…LVNWVQQTLA (228 aa)). Active-site charge relay system residues include H57 and D102. The propeptide occupies 147–148 (TN). S195 (charge relay system) is an active-site residue.

Belongs to the peptidase S1 family.

It is found in the secreted. The protein resides in the extracellular space. The enzyme catalyses Preferential cleavage: Tyr-|-Xaa, Trp-|-Xaa, Phe-|-Xaa, Leu-|-Xaa.. The polypeptide is Chymotrypsinogen A (Bos taurus (Bovine)).